We begin with the raw amino-acid sequence, 96 residues long: MFAPRFVVSMLGALAAFAIATYFLTGSIASTAVQTLLCAVLIQVGYFLAVLFLVWKEARDRRKLSPGQLPADPTNDEKQTGKLSLRRLNRPPHFNS.

2 helical membrane passes run 6-26 and 35-55; these read FVVS…FLTG and TLLC…FLVW. Residues 64–96 form a disordered region; the sequence is LSPGQLPADPTNDEKQTGKLSLRRLNRPPHFNS.

Its subcellular location is the cell membrane. It participates in glycan metabolism; exopolysaccharide biosynthesis. Functionally, inhibition of exopolysaccharide synthesis (EPS) and nodulation ability (NOD). This chain is Exopolysaccharide production repressor protein (exoX), found in Sinorhizobium fredii (strain NBRC 101917 / NGR234).